The sequence spans 62 residues: Photosystem II reaction center protein Z (62 aa).

A run of 2 helical transmembrane segments spans residues 8 to 28 and 41 to 61; these read AVFA…AVFA and FSGA…NSSV.

The protein belongs to the PsbZ family. PSII is composed of 1 copy each of membrane proteins PsbA, PsbB, PsbC, PsbD, PsbE, PsbF, PsbH, PsbI, PsbJ, PsbK, PsbL, PsbM, PsbT, PsbY, PsbZ, Psb30/Ycf12, at least 3 peripheral proteins of the oxygen-evolving complex and a large number of cofactors. It forms dimeric complexes.

It is found in the plastid. The protein resides in the chloroplast thylakoid membrane. Its function is as follows. May control the interaction of photosystem II (PSII) cores with the light-harvesting antenna, regulates electron flow through the 2 photosystem reaction centers. PSII is a light-driven water plastoquinone oxidoreductase, using light energy to abstract electrons from H(2)O, generating a proton gradient subsequently used for ATP formation. In Selaginella uncinata (Blue spike-moss), this protein is Photosystem II reaction center protein Z.